The sequence spans 576 residues: Arginine--tRNA ligase (576 aa).

Positions 122-132 (PNVAKQMHVGH) match the 'HIGH' region motif.

The protein belongs to the class-I aminoacyl-tRNA synthetase family. As to quaternary structure, monomer.

It is found in the cytoplasm. The enzyme catalyses tRNA(Arg) + L-arginine + ATP = L-arginyl-tRNA(Arg) + AMP + diphosphate. The protein is Arginine--tRNA ligase of Yersinia enterocolitica serotype O:8 / biotype 1B (strain NCTC 13174 / 8081).